A 1078-amino-acid chain; its full sequence is Phosphatidylinositol-3,5-bisphosphate 3-phosphatase MTMR4 (1078 aa).

The 418-residue stretch at 154–571 (DHVKSRFQIE…RALQLWTAVY (418 aa)) folds into the Myotubularin phosphatase domain. Residues 267-290 (RMPNGNPSNKGNNDGSDNSDTDFD) are disordered. Low complexity predominate over residues 270 to 282 (NGNPSNKGNNDGS). A 1,2-diacyl-sn-glycero-3-phospho-(1D-myo-inositol-3,5-bisphosphate)-binding residues include Asn-321, Asn-346, and Ile-347. A 1,2-diacyl-sn-glycero-3-phospho-(1D-myo-inositol-3-phosphate)-binding residues include Asn-321, Asn-346, and Ile-347. Cys-408 acts as the Phosphocysteine intermediate in catalysis. Residues Ser-409, Asp-410, Gly-411, Trp-412, Asp-413, Arg-414, Lys-450, and Arg-454 each contribute to the a 1,2-diacyl-sn-glycero-3-phospho-(1D-myo-inositol-3,5-bisphosphate) site. A 1,2-diacyl-sn-glycero-3-phospho-(1D-myo-inositol-3-phosphate) is bound by residues Ser-409, Asp-410, Gly-411, Trp-412, Asp-413, and Arg-414. Residue Arg-454 coordinates a 1,2-diacyl-sn-glycero-3-phospho-(1D-myo-inositol-3-phosphate). Residues 629 to 648 (SSDPNLNNHQGNLESCSSSK) show a composition bias toward polar residues. The disordered stretch occupies residues 629 to 694 (SSDPNLNNHQ…SGSATNQNNN (66 aa)). Residues 904–935 (VQQRLRQMEASYKQEVDLLRRQVWELQLQLEI) adopt a coiled-coil conformation. The interval 960–982 (DGSDMDDLYSDKSEDRLSEASWE) is disordered. Positions 968 to 982 (YSDKSEDRLSEASWE) are enriched in basic and acidic residues. The FYVE-type zinc-finger motif lies at 997–1057 (DHMASHCFNC…VCNTCYDHIQ (61 aa)). Positions 1003, 1006, 1019, 1022, 1027, 1030, 1049, and 1052 each coordinate Zn(2+).

It belongs to the protein-tyrosine phosphatase family. Non-receptor class myotubularin subfamily. In terms of assembly, homooligomeric.

Its subcellular location is the early endosome membrane. It is found in the recycling endosome membrane. The protein localises to the late endosome membrane. It localises to the cytoplasmic vesicle. The protein resides in the phagosome membrane. It catalyses the reaction a 1,2-diacyl-sn-glycero-3-phospho-(1D-myo-inositol-3-phosphate) + H2O = a 1,2-diacyl-sn-glycero-3-phospho-(1D-myo-inositol) + phosphate. The enzyme catalyses a 1,2-diacyl-sn-glycero-3-phospho-(1D-myo-inositol-3,5-bisphosphate) + H2O = a 1,2-diacyl-sn-glycero-3-phospho-(1D-myo-inositol-5-phosphate) + phosphate. The catalysed reaction is 1,2-dioctanoyl-sn-glycero-3-phospho-(1-D-myo-inositol-3-phosphate) + H2O = 1,2-dioctanoyl-sn-glycero-3-phospho-(1D-myo-inositol) + phosphate. It carries out the reaction 1,2-dioctanoyl-sn-glycero-3-phospho-(1D-myo-inositol-3,5-bisphosphate) + H2O = 1,2-dioctanoyl-sn-glycero-3-phospho-(1D-myo-inositol-5-phosphate) + phosphate. Its function is as follows. Lipid phosphatase that specifically dephosphorylates the D-3 position of phosphatidylinositol 3-phosphate and phosphatidylinositol 3,5-bisphosphate, generating phosphatidylinositol and phosphatidylinositol 5-phosphate. Decreases the levels of phosphatidylinositol 3-phosphate, a phospholipid found in cell membranes where it acts as key regulator of both cell signaling and intracellular membrane traffic, in a subset of endosomal membranes to negatively regulate both endocytic recycling and trafficking and/or maturation of endosomes toward lysosomes. Through phosphatidylinositol 3-phosphate turnover in phagosome membranes regulates phagocytosis and phagosome maturation. By decreasing phosphatidylinositol 3-monophosphate (PI3P) levels in immune cells it can also regulate the innate immune response. Beside its lipid phosphatase activity, can also function as a molecular adapter to regulate midbody abscission during mitotic cytokinesis. Can also negatively regulate TGF-beta and BMP signaling through Smad proteins dephosphorylation and retention in endosomes. This Xenopus laevis (African clawed frog) protein is Phosphatidylinositol-3,5-bisphosphate 3-phosphatase MTMR4 (mtmr4).